A 200-amino-acid polypeptide reads, in one-letter code: ATP synthase subunit b 1 (200 aa).

The helical transmembrane segment at 14–34 (AAVIVVVSLMAFCCAGFAVAA) threads the bilayer.

It belongs to the ATPase B chain family. In terms of assembly, F-type ATPases have 2 components, F(1) - the catalytic core - and F(0) - the membrane proton channel. F(1) has five subunits: alpha(3), beta(3), gamma(1), delta(1), epsilon(1). F(0) has three main subunits: a(1), b(2) and c(10-14). The alpha and beta chains form an alternating ring which encloses part of the gamma chain. F(1) is attached to F(0) by a central stalk formed by the gamma and epsilon chains, while a peripheral stalk is formed by the delta and b chains.

Its subcellular location is the cell inner membrane. Its function is as follows. F(1)F(0) ATP synthase produces ATP from ADP in the presence of a proton or sodium gradient. F-type ATPases consist of two structural domains, F(1) containing the extramembraneous catalytic core and F(0) containing the membrane proton channel, linked together by a central stalk and a peripheral stalk. During catalysis, ATP synthesis in the catalytic domain of F(1) is coupled via a rotary mechanism of the central stalk subunits to proton translocation. Component of the F(0) channel, it forms part of the peripheral stalk, linking F(1) to F(0). The protein is ATP synthase subunit b 1 of Desulfosudis oleivorans (strain DSM 6200 / JCM 39069 / Hxd3) (Desulfococcus oleovorans).